Here is a 255-residue protein sequence, read N- to C-terminus: Type III pantothenate kinase (255 aa).

Asp-6–Val-13 lines the ATP pocket. Substrate contacts are provided by residues Tyr-100 and Gly-107–Arg-110. The Proton acceptor role is filled by Asp-109. Asp-129 contacts K(+). Thr-132 contacts ATP. Thr-184 lines the substrate pocket.

This sequence belongs to the type III pantothenate kinase family. As to quaternary structure, homodimer. The cofactor is NH4(+). K(+) serves as cofactor.

Its subcellular location is the cytoplasm. The catalysed reaction is (R)-pantothenate + ATP = (R)-4'-phosphopantothenate + ADP + H(+). It functions in the pathway cofactor biosynthesis; coenzyme A biosynthesis; CoA from (R)-pantothenate: step 1/5. Functionally, catalyzes the phosphorylation of pantothenate (Pan), the first step in CoA biosynthesis. In Brevibacillus brevis (strain 47 / JCM 6285 / NBRC 100599), this protein is Type III pantothenate kinase.